The primary structure comprises 91 residues: Probable Fe(2+)-trafficking protein (91 aa).

This sequence belongs to the Fe(2+)-trafficking protein family. Monomer.

Functionally, could be a mediator in iron transactions between iron acquisition and iron-requiring processes, such as synthesis and/or repair of Fe-S clusters in biosynthetic enzymes. This chain is Probable Fe(2+)-trafficking protein, found in Citrobacter koseri (strain ATCC BAA-895 / CDC 4225-83 / SGSC4696).